The following is a 137-amino-acid chain: ATP synthase epsilon chain, chloroplastic (137 aa).

The protein belongs to the ATPase epsilon chain family. In terms of assembly, F-type ATPases have 2 components, CF(1) - the catalytic core - and CF(0) - the membrane proton channel. CF(1) has five subunits: alpha(3), beta(3), gamma(1), delta(1), epsilon(1). CF(0) has three main subunits: a, b and c.

The protein resides in the plastid. It localises to the chloroplast thylakoid membrane. Produces ATP from ADP in the presence of a proton gradient across the membrane. The chain is ATP synthase epsilon chain, chloroplastic from Hordeum vulgare (Barley).